A 425-amino-acid chain; its full sequence is UDP-N-acetylglucosamine 1-carboxyvinyltransferase (425 aa).

22 to 23 (KN) is a binding site for phosphoenolpyruvate. A UDP-N-acetyl-alpha-D-glucosamine-binding site is contributed by Arg-91. The active-site Proton donor is Cys-115. Cys-115 bears the 2-(S-cysteinyl)pyruvic acid O-phosphothioketal mark. UDP-N-acetyl-alpha-D-glucosamine is bound by residues 120–124 (RPIDL), Asp-305, and Val-327.

It belongs to the EPSP synthase family. MurA subfamily.

It localises to the cytoplasm. It carries out the reaction phosphoenolpyruvate + UDP-N-acetyl-alpha-D-glucosamine = UDP-N-acetyl-3-O-(1-carboxyvinyl)-alpha-D-glucosamine + phosphate. The protein operates within cell wall biogenesis; peptidoglycan biosynthesis. Functionally, cell wall formation. Adds enolpyruvyl to UDP-N-acetylglucosamine. The sequence is that of UDP-N-acetylglucosamine 1-carboxyvinyltransferase from Coprothermobacter proteolyticus (strain ATCC 35245 / DSM 5265 / OCM 4 / BT).